A 193-amino-acid chain; its full sequence is Large ribosomal subunit protein uL5 (193 aa).

The protein belongs to the universal ribosomal protein uL5 family. As to quaternary structure, part of the 50S ribosomal subunit; part of the 5S rRNA/L5/L18/L25 subcomplex. Contacts the 5S rRNA and the P site tRNA. Forms a bridge to the 30S subunit in the 70S ribosome.

In terms of biological role, this is one of the proteins that bind and probably mediate the attachment of the 5S RNA into the large ribosomal subunit, where it forms part of the central protuberance. In the 70S ribosome it contacts protein S13 of the 30S subunit (bridge B1b), connecting the 2 subunits; this bridge is implicated in subunit movement. Contacts the P site tRNA; the 5S rRNA and some of its associated proteins might help stabilize positioning of ribosome-bound tRNAs. This chain is Large ribosomal subunit protein uL5, found in Renibacterium salmoninarum (strain ATCC 33209 / DSM 20767 / JCM 11484 / NBRC 15589 / NCIMB 2235).